Here is a 331-residue protein sequence, read N- to C-terminus: Taste receptor type 2 member 38 (331 aa).

The Extracellular portion of the chain corresponds to 1-17 (MLTLTPVLTVSYEAKIS). A helical membrane pass occupies residues 18–38 (FLFLSVVEFAVGIMANAFIVL). Over 39 to 54 (VNFWDMVKKQPLNNCD) the chain is Cytoplasmic. The chain crosses the membrane as a helical span at residues 55–75 (IALLCLSITRLFLQGLLLLDA). Residues 76-94 (IQLACFQQMKDPLSHNYQA) lie on the Extracellular side of the membrane. Residues 95–115 (ILTLWMSANQVSLWLAACLSL) traverse the membrane as a helical segment. Over 116-142 (LYCAKIVRFSHTFPLHLASWVSRRFLQ) the chain is Cytoplasmic. Residues 143 to 163 (MLLVALLFSGVCTALCLWDFF) traverse the membrane as a helical segment. The Extracellular portion of the chain corresponds to 164–198 (SRSHTVVTSMLHMNNTEFNLQIEKLNFFYSFVFCN). The N-linked (GlcNAc...) asparagine glycan is linked to Asn177. A helical membrane pass occupies residues 199–219 (VGSVPPSLVFLISSGVLVISL). At 220–243 (GNHMRTMKSQTRGSRDPSLEAHVR) the chain is on the cytoplasmic side. Residues 244-264 (AIIFLVSFLCFYVVSFCAALI) form a helical membrane-spanning segment. Residues 265–276 (SIPLLVLWHNKG) are Extracellular-facing. The helical transmembrane segment at 277–297 (GVMVCIGMMAACPSGHAAILI) threads the bilayer. The Cytoplasmic segment spans residues 298–331 (SGNAKLKKVIVTILFWFQSRQKVRRVHKVLPRIL).

It belongs to the G-protein coupled receptor T2R family. In terms of tissue distribution, expressed in tongue, stomach and duodenum.

Its subcellular location is the membrane. Functionally, putative taste receptor which may play a role in the perception of bitterness. The sequence is that of Taste receptor type 2 member 38 (Tas2r38) from Rattus norvegicus (Rat).